A 353-amino-acid chain; its full sequence is GTPase Obg (353 aa).

Residues 1–159 form the Obg domain; the sequence is MKFLDEAKVY…RWIWLRLKLI (159 aa). The 168-residue stretch at 160-327 folds into the OBG-type G domain; that stretch reads ADAGLVGLPN…ALRALAAVIG (168 aa). Residues 166–173, 191–195, 212–215, 279–282, and 308–310 each bind GTP; these read GLPNAGKS, FTTLH, DIPG, NKID, and SGV. 2 residues coordinate Mg(2+): Ser-173 and Thr-193.

The protein belongs to the TRAFAC class OBG-HflX-like GTPase superfamily. OBG GTPase family. As to quaternary structure, monomer. Mg(2+) is required as a cofactor.

It is found in the cytoplasm. Its function is as follows. An essential GTPase which binds GTP, GDP and possibly (p)ppGpp with moderate affinity, with high nucleotide exchange rates and a fairly low GTP hydrolysis rate. Plays a role in control of the cell cycle, stress response, ribosome biogenesis and in those bacteria that undergo differentiation, in morphogenesis control. This Rhodopseudomonas palustris (strain BisB5) protein is GTPase Obg.